We begin with the raw amino-acid sequence, 416 residues long: MINRRYELFKDVSDADWNDWRWQVRNRIETVEELKKYIPLTKEEEEGVAQCVKSLRMAITPYYLSLIDPNDPNDPVRKQAIPTALELNKAAADLEDPLHEDTDSPVPGLTHRYPDRVLLLITDMCSMYCRHCTRRRFAGQSDDSMPMERIDKAIDYIRNTPQVRDVLLSGGDALLVSDETLEYIIAKLREIPHVEIVRIGSRTPVVLPQRITPELVNMLKKYHPVWLNTHFNHPNEITEESTRACQLLADAGVPLGNQSVLLRGVNDCVHVMKELVNKLVKIRVRPYYIYQCDLSLGLEHFRTPVSKGIEIIEGLRGHTSGYCVPTFVVDAPGGGGKTPVMPNYVISQSHDKVILRNFEGVITTYSEPINYTPGCNCDVCTGKKKVHKVGVAGLLNGEGMALEPVGLERNKRHVQE.

The Radical SAM core domain occupies 111–322 (HRYPDRVLLL…EGLRGHTSGY (212 aa)). [4Fe-4S] cluster is bound by residues Cys125, Cys129, and Cys132. Cys268 contacts Zn(2+). Lys337 bears the N6-(pyridoxal phosphate)lysine mark. Cys375, Cys377, and Cys380 together coordinate Zn(2+).

It belongs to the radical SAM superfamily. KamA family. Homohexamer; trimer of dimers. Forms a homotetramer in crystal. Requires [4Fe-4S] cluster as cofactor. It depends on pyridoxal 5'-phosphate as a cofactor. The cofactor is Co(2+). Zn(2+) is required as a cofactor.

The enzyme catalyses L-lysine = (3S)-3,6-diaminohexanoate. The protein operates within amino-acid degradation; L-lysine degradation via acetate pathway. Its activity is regulated as follows. The enzyme is activated by S-adenosyl-methionine. Activity is dependent on the levels of Fe(2+), S(2-) and Co(2+). Activity is stimulated by addition of EDTA. S-adenosylhomocysteine competitively inhibits the activity whereas 5'-methylthioadenosine is not inhibitory in the presence of S-adenosylmethionine. Competitively inhibited by 4-thialysine. Inhibited by sodium borohydride (1 mM) when added with 2 mM dithionate. Moderately inhibited by beta-mercaptoethanol (30 mM) along with dithionate. Higher concentrations of Fe(2+) partially inhibit the activity and Co(2+) at 1 mM is a strong inhibitor. Hydroxylamine, isonicotinic acid hydrazide inhibit effectively, in addition, hydrazine, D-penicillamine and D-cycloserine are also inhibitory at high concentrations. In terms of biological role, catalyzes the interconversion of L-alpha-lysine and L-beta-lysine. The protein is L-lysine 2,3-aminomutase (kamA) of Clostridium subterminale.